A 133-amino-acid polypeptide reads, in one-letter code: MGQLRIKDKSQRDGYKPNQSIAILRYAHISPLKARLVLREIQGKDVGDALYLLAVIPKKAARIAEKVLKSVIANAEQKGLDLDRLYIKKAVADDGPILKKWIPRAHGRATMVRKRLSHITIVLEEKPEGKEEE.

The protein belongs to the universal ribosomal protein uL22 family. In terms of assembly, part of the 50S ribosomal subunit.

Functionally, this protein binds specifically to 23S rRNA; its binding is stimulated by other ribosomal proteins, e.g. L4, L17, and L20. It is important during the early stages of 50S assembly. It makes multiple contacts with different domains of the 23S rRNA in the assembled 50S subunit and ribosome. Its function is as follows. The globular domain of the protein is located near the polypeptide exit tunnel on the outside of the subunit, while an extended beta-hairpin is found that lines the wall of the exit tunnel in the center of the 70S ribosome. The protein is Large ribosomal subunit protein uL22 of Aquifex aeolicus (strain VF5).